Reading from the N-terminus, the 398-residue chain is Enoyl-[acyl-carrier-protein] reductase [NADH] (398 aa).

NAD(+)-binding positions include 48–53, 74–75, 111–112, and 139–140; these read GASTGY, FE, DA, and LA. Position 225 (Tyr225) interacts with substrate. The active-site Proton donor is the Tyr235. Residues Lys244 and 273–275 contribute to the NAD(+) site; that span reads VVT.

Belongs to the TER reductase family. In terms of assembly, monomer.

It carries out the reaction a 2,3-saturated acyl-[ACP] + NAD(+) = a (2E)-enoyl-[ACP] + NADH + H(+). Its pathway is lipid metabolism; fatty acid biosynthesis. Its function is as follows. Involved in the final reduction of the elongation cycle of fatty acid synthesis (FAS II). Catalyzes the reduction of a carbon-carbon double bond in an enoyl moiety that is covalently linked to an acyl carrier protein (ACP). The sequence is that of Enoyl-[acyl-carrier-protein] reductase [NADH] from Paraburkholderia phytofirmans (strain DSM 17436 / LMG 22146 / PsJN) (Burkholderia phytofirmans).